The primary structure comprises 589 residues: Arylsulfatase L (589 aa).

Positions M1–S31 are cleaved as a signal peptide. Ca(2+) is bound by residues D46 and D47. Residue N58 is glycosylated (N-linked (GlcNAc...) asparagine). C86 lines the Ca(2+) pocket. C86 serves as the catalytic Nucleophile. The residue at position 86 (C86) is a 3-oxoalanine (Cys). N-linked (GlcNAc...) asparagine glycosylation occurs at N125. Residue K145 participates in substrate binding. The active site involves H147. A glycan (N-linked (GlcNAc...) asparagine) is linked at N258. H301 lines the substrate pocket. N344 is a glycosylation site (N-linked (GlcNAc...) asparagine). Ca(2+) is bound by residues D353 and H354. K378 contacts substrate.

The protein belongs to the sulfatase family. Ca(2+) is required as a cofactor. N-glycosylated. In terms of processing, the conversion to 3-oxoalanine (also known as C-formylglycine, FGly), of a serine or cysteine residue in prokaryotes and of a cysteine residue in eukaryotes, is critical for catalytic activity. In terms of tissue distribution, expressed in the pancreas, liver and kidney.

Its subcellular location is the golgi apparatus. The protein localises to the golgi stack. The enzyme catalyses an aryl sulfate + H2O = a phenol + sulfate + H(+). Inhibited by millimolar concentrations of warfarin. In terms of biological role, exhibits arylsulfatase activity towards the artificial substrate 4-methylumbelliferyl sulfate. May be essential for the correct composition of cartilage and bone matrix during development. Has no activity toward steroid sulfates. The sequence is that of Arylsulfatase L from Homo sapiens (Human).